The following is a 306-amino-acid chain: WUSCHEL-related homeobox 13 (306 aa).

The span at 1–11 shows a compositional bias: pro residues; that stretch reads MMALGVPPPPS. 3 disordered regions span residues 1–20, 103–142, and 190–276; these read MMAL…GPLR, PRSH…PRPE, and SRSK…ARAT. The span at 126–142 shows a compositional bias: basic and acidic residues; it reads GEERVPDPKPRRNPRPE. The segment at residues 132-196 is a DNA-binding region (homeobox; WUS-type); sequence DPKPRRNPRP…NRKSRSKNKL (65 aa). The segment covering 199–210 has biased composition (gly residues); sequence GGTGRAGLGLGG. Residues 231–242 show a composition bias toward pro residues; it reads FTPPPILPPQPV. The span at 243 to 270 shows a compositional bias: low complexity; sequence QPQQQLVSPVAAPTSLSSSSSDRSSGSS.

This sequence belongs to the WUS homeobox family.

Its subcellular location is the nucleus. In terms of biological role, transcription factor which may be involved in developmental processes. In Oryza sativa subsp. japonica (Rice), this protein is WUSCHEL-related homeobox 13 (WOX13).